The sequence spans 200 residues: Proteasome subunit beta 2 (200 aa).

A propeptide (removed in mature form; by autocatalysis) is located at residue methionine 1. Threonine 2 (nucleophile) is an active-site residue.

Belongs to the peptidase T1B family. As to quaternary structure, the 20S proteasome core is composed of 14 alpha and 14 beta subunits that assemble into four stacked heptameric rings, resulting in a barrel-shaped structure. The two inner rings, each composed of seven catalytic beta subunits, are sandwiched by two outer rings, each composed of seven alpha subunits. The catalytic chamber with the active sites is on the inside of the barrel. Has a gated structure, the ends of the cylinder being occluded by the N-termini of the alpha-subunits. Is capped at one or both ends by the proteasome regulatory ATPase, PAN.

Its subcellular location is the cytoplasm. It carries out the reaction Cleavage of peptide bonds with very broad specificity.. The formation of the proteasomal ATPase PAN-20S proteasome complex, via the docking of the C-termini of PAN into the intersubunit pockets in the alpha-rings, triggers opening of the gate for substrate entry. Interconversion between the open-gate and close-gate conformations leads to a dynamic regulation of the 20S proteasome proteolysis activity. Component of the proteasome core, a large protease complex with broad specificity involved in protein degradation. The chain is Proteasome subunit beta 2 from Pyrobaculum islandicum (strain DSM 4184 / JCM 9189 / GEO3).